A 454-amino-acid chain; its full sequence is Enolase (454 aa).

Position 167 (glutamine 167) interacts with (2R)-2-phosphoglycerate. Glutamate 209 acts as the Proton donor in catalysis. Mg(2+) is bound by residues aspartate 250, glutamate 312, and aspartate 339. The (2R)-2-phosphoglycerate site is built by lysine 364, arginine 393, serine 394, and lysine 415. The active-site Proton acceptor is lysine 364.

The protein belongs to the enolase family. The cofactor is Mg(2+).

It is found in the cytoplasm. The protein resides in the secreted. It localises to the cell surface. It carries out the reaction (2R)-2-phosphoglycerate = phosphoenolpyruvate + H2O. It functions in the pathway carbohydrate degradation; glycolysis; pyruvate from D-glyceraldehyde 3-phosphate: step 4/5. Its function is as follows. Catalyzes the reversible conversion of 2-phosphoglycerate (2-PG) into phosphoenolpyruvate (PEP). It is essential for the degradation of carbohydrates via glycolysis. In Mycoplasmopsis agalactiae (strain NCTC 10123 / CIP 59.7 / PG2) (Mycoplasma agalactiae), this protein is Enolase.